The following is a 495-amino-acid chain: Flagellin (495 aa).

Belongs to the bacterial flagellin family.

It localises to the secreted. The protein localises to the bacterial flagellum. Its function is as follows. Flagellin is the subunit protein which polymerizes to form the filaments of bacterial flagella. This Salmonella typhimurium (strain LT2 / SGSC1412 / ATCC 700720) protein is Flagellin (fliC).